A 782-amino-acid chain; its full sequence is Endonuclease MutS2 (782 aa).

Position 336-343 (336-343) interacts with ATP; the sequence is GPNTGGKT. One can recognise a Smr domain in the interval 707 to 782; the sequence is LDLRGYRYED…GFGVTVATLK (76 aa).

The protein belongs to the DNA mismatch repair MutS family. MutS2 subfamily. Homodimer. Binds to stalled ribosomes, contacting rRNA.

Functionally, endonuclease that is involved in the suppression of homologous recombination and thus may have a key role in the control of bacterial genetic diversity. In terms of biological role, acts as a ribosome collision sensor, splitting the ribosome into its 2 subunits. Detects stalled/collided 70S ribosomes which it binds and splits by an ATP-hydrolysis driven conformational change. Acts upstream of the ribosome quality control system (RQC), a ribosome-associated complex that mediates the extraction of incompletely synthesized nascent chains from stalled ribosomes and their subsequent degradation. Probably generates substrates for RQC. This is Endonuclease MutS2 from Staphylococcus aureus (strain COL).